A 110-amino-acid polypeptide reads, in one-letter code: Cation efflux system protein CusF (110 aa).

A signal peptide spans 1–21 (MKKALQVAMFSLFTVIGFNAQ).

As to quaternary structure, the cus efflux system is composed of CusA, CusB, CusC and CusF. Interacts with copper-exporting P-type ATPase CopA; when this protein is precharged with copper it binds very little CopA.

It localises to the periplasm. Its function is as follows. Part of a cation efflux system that mediates resistance to copper and silver. Binds one copper per polypeptide. The sequence is that of Cation efflux system protein CusF (cusF) from Escherichia coli (strain K12).